The chain runs to 125 residues: Small ribosomal subunit protein bS6 (125 aa).

The protein belongs to the bacterial ribosomal protein bS6 family.

Binds together with bS18 to 16S ribosomal RNA. The chain is Small ribosomal subunit protein bS6 (rpsF) from Pasteurella multocida (strain Pm70).